A 125-amino-acid chain; its full sequence is Fluoride-specific ion channel FluC (125 aa).

4 consecutive transmembrane segments (helical) span residues methionine 1–glycine 21, phenylalanine 34–phenylalanine 54, threonine 72–phenylalanine 92, and leucine 101–isoleucine 121. 2 residues coordinate Na(+): glycine 76 and threonine 79.

It belongs to the fluoride channel Fluc/FEX (TC 1.A.43) family.

It is found in the cell inner membrane. The enzyme catalyses fluoride(in) = fluoride(out). Its activity is regulated as follows. Na(+) is not transported, but it plays an essential structural role and its presence is essential for fluoride channel function. Fluoride-specific ion channel. Important for reducing fluoride concentration in the cell, thus reducing its toxicity. This Acidithiobacillus ferrooxidans (strain ATCC 23270 / DSM 14882 / CIP 104768 / NCIMB 8455) (Ferrobacillus ferrooxidans (strain ATCC 23270)) protein is Fluoride-specific ion channel FluC.